The chain runs to 511 residues: BAR/IMD domain-containing adapter protein 2-like 1 (511 aa).

The IMD domain maps to 1–249; the sequence is MSRGPEEVNR…MNMIEEIKTP (249 aa). Residues 115–154 are a coiled coil; sequence MNATLKRYQTEHKNKLESLEKSQAELKKIRRKSQGSRNAL. 2 positions are modified to phosphothreonine: Thr248 and Thr257. Phosphoserine occurs at positions 261 and 281. The interval 302–328 is disordered; it reads NNPATAAPNSQRVNNSTGTSEDPSLQR. Polar residues predominate over residues 303-328; that stretch reads NPATAAPNSQRVNNSTGTSEDPSLQR. A phosphoserine mark is found at Ser331 and Ser354. Residues 339-402 form the SH3 domain; sequence MKKQKVKTIF…PSSYTKLLEE (64 aa). Thr412 carries the post-translational modification Phosphothreonine. Residues Ser414, Ser420, and Ser422 each carry the phosphoserine modification. The interval 451–511 is disordered; sequence RRADSARTTS…TNDRSAPIIR (61 aa). The segment at 483–511 is binds F-actin; the sequence is PPFLSGENPFATVKLRPTVTNDRSAPIIR.

In terms of assembly, interacts with RAC1. Binds to F-actin. Interacts with FASLG. Interacts (via SH3 domain) with E.coli effector protein EspF(U) (via PXXP motifs). Identified in a complex containing at least WASL, BAIAP2L1 and E.coli EspF(U). Interacts with E.coli intimin receptor Tir. Post-translationally, phosphorylated on tyrosine in response to insulin.

The protein resides in the cytoplasm. Its subcellular location is the cytoskeleton. Its function is as follows. May function as adapter protein. Involved in the formation of clusters of actin bundles. Plays a role in the reorganization of the actin cytoskeleton in response to bacterial infection. The chain is BAR/IMD domain-containing adapter protein 2-like 1 (BAIAP2L1) from Homo sapiens (Human).